The following is a 277-amino-acid chain: Eukaryotic translation initiation factor 3 subunit J (277 aa).

A disordered region spans residues 1–80; it reads MSWDDEDFAV…PAATKNTMLD (80 aa). The span at 23 to 43 shows a compositional bias: acidic residues; sequence WDDEFAENDDEPVLESWEDEE. A compositionally biased stretch (low complexity) spans 50–75; it reads KAAAAAAAKAPKKASPSPAATPAATK. The stretch at 199 to 230 forms a coiled coil; the sequence is TVENIRQTIATLNVLMKDKEREERQARLAKVK. The tract at residues 257 to 277 is disordered; sequence DNDFDLGGNDNFDDFGEDDFM. Residues 267 to 277 show a composition bias toward acidic residues; sequence NFDDFGEDDFM.

Belongs to the eIF-3 subunit J family. In terms of assembly, component of the eukaryotic translation initiation factor 3 (eIF-3) complex.

The protein localises to the cytoplasm. Functionally, component of the eukaryotic translation initiation factor 3 (eIF-3) complex, which is involved in protein synthesis of a specialized repertoire of mRNAs and, together with other initiation factors, stimulates binding of mRNA and methionyl-tRNAi to the 40S ribosome. The eIF-3 complex specifically targets and initiates translation of a subset of mRNAs involved in cell proliferation. This Kluyveromyces lactis (strain ATCC 8585 / CBS 2359 / DSM 70799 / NBRC 1267 / NRRL Y-1140 / WM37) (Yeast) protein is Eukaryotic translation initiation factor 3 subunit J.